A 364-amino-acid polypeptide reads, in one-letter code: Histidinol-phosphate aminotransferase (364 aa).

Position 222 is an N6-(pyridoxal phosphate)lysine (Lys-222).

The protein belongs to the class-II pyridoxal-phosphate-dependent aminotransferase family. Histidinol-phosphate aminotransferase subfamily. As to quaternary structure, homodimer. It depends on pyridoxal 5'-phosphate as a cofactor.

The catalysed reaction is L-histidinol phosphate + 2-oxoglutarate = 3-(imidazol-4-yl)-2-oxopropyl phosphate + L-glutamate. It participates in amino-acid biosynthesis; L-histidine biosynthesis; L-histidine from 5-phospho-alpha-D-ribose 1-diphosphate: step 7/9. This Brevibacillus brevis (strain 47 / JCM 6285 / NBRC 100599) protein is Histidinol-phosphate aminotransferase.